Here is a 623-residue protein sequence, read N- to C-terminus: MKSIFIIIFILYVFQVNSQTIYPIDPSGKCEQYIGDTPSSPCSKFLNNLDSIYVSSNATQQNAMKKLDEYFGILGAIGTSGCKSDSLTYKTLCSIYLPGCESFTNNQTNITIAIPKRICYNTCNNVTTKCGVPKFYFSCDQIEPVSGLPMFPLNYSEFNLTNYDVGNPNYTVQCYGPLSDNTMVNLDSSYCPPPLFYHNSTDHDADYDRGYLFVSETSNCVVPNPVPLYTNEQWDQLYNLSNTLAVLSTFGSLYLLVTFIILNPKVTSFDRMYGFFNGSVFMMSLSGVILFIAGGPRALIKDGGARISVFEDPLCSSTGFIFQLFAINAILFWAYMGFDLWWRVKYITKPLNIQKYYVPIAFTISFIFSVIPLATKNYRMVRGNIHCWVHKAVLQNTLFFGPLGLTLTISTGFIGLVIYEIYKIVKATGRGGIMKLEIKPILNIVLIYFSFVYIFAFNFHNDNNSKNTYGSIDEFFQCTLESDDPSKCTVGGPSIGSLGYFIYCIRIYGIYCFFLQGLNERAFKIWKRSIVFNNRFILFIKVKLFSMDNNSPSESGNSSTTAGTSTTINNSNINKKNNNSKPTLSTMDSNAFSKNNDSDSDFDDYDPYHKKQNDIEIGSVNIK.

Residues 1–18 (MKSIFIIIFILYVFQVNS) form the signal peptide. At 19–243 (QTIYPIDPSG…WDQLYNLSNT (225 aa)) the chain is on the extracellular side. Positions 25–163 (DPSGKCEQYI…NYSEFNLTNY (139 aa)) constitute an FZ domain. Disulfide bonds link C30-C100 and C42-C93. Residues N57, N106, N109, N154, N159, N169, N199, and N239 are each glycosylated (N-linked (GlcNAc...) asparagine). A helical transmembrane segment spans residues 244–264 (LAVLSTFGSLYLLVTFIILNP). Residues 265-273 (KVTSFDRMY) lie on the Cytoplasmic side of the membrane. Residues 274–294 (GFFNGSVFMMSLSGVILFIAG) traverse the membrane as a helical segment. Topologically, residues 295–317 (GPRALIKDGGARISVFEDPLCSS) are extracellular. Residues 318–338 (TGFIFQLFAINAILFWAYMGF) traverse the membrane as a helical segment. At 339-354 (DLWWRVKYITKPLNIQ) the chain is on the cytoplasmic side. A helical transmembrane segment spans residues 355–375 (KYYVPIAFTISFIFSVIPLAT). Residues 376-397 (KNYRMVRGNIHCWVHKAVLQNT) are Extracellular-facing. A helical transmembrane segment spans residues 398-418 (LFFGPLGLTLTISTGFIGLVI). The Cytoplasmic segment spans residues 419 to 439 (YEIYKIVKATGRGGIMKLEIK). The chain crosses the membrane as a helical span at residues 440–460 (PILNIVLIYFSFVYIFAFNFH). At 461–494 (NDNNSKNTYGSIDEFFQCTLESDDPSKCTVGGPS) the chain is on the extracellular side. An N-linked (GlcNAc...) asparagine glycan is attached at N463. A helical transmembrane segment spans residues 495–515 (IGSLGYFIYCIRIYGIYCFFL). The Cytoplasmic portion of the chain corresponds to 516–623 (QGLNERAFKI…DIEIGSVNIK (108 aa)). Positions 552-590 (PSESGNSSTTAGTSTTINNSNINKKNNNSKPTLSTMDSN) are disordered. The span at 555–580 (SGNSSTTAGTSTTINNSNINKKNNNS) shows a compositional bias: low complexity.

It belongs to the G-protein coupled receptor Fz/Smo family.

Its subcellular location is the membrane. This chain is Frizzled and smoothened-like protein M (fslM-1), found in Dictyostelium discoideum (Social amoeba).